The chain runs to 90 residues: UPF0213 protein lin0209 (90 aa).

The region spanning 5 to 80 is the GIY-YIG domain; that stretch reads NEHFFYVLKC…KKLSRKNKDS (76 aa).

The protein belongs to the UPF0213 family.

This Listeria innocua serovar 6a (strain ATCC BAA-680 / CLIP 11262) protein is UPF0213 protein lin0209.